The sequence spans 527 residues: Glutamate--cysteine ligase (527 aa).

Belongs to the glutamate--cysteine ligase type 1 family. Type 1 subfamily.

The enzyme catalyses L-cysteine + L-glutamate + ATP = gamma-L-glutamyl-L-cysteine + ADP + phosphate + H(+). Its pathway is sulfur metabolism; glutathione biosynthesis; glutathione from L-cysteine and L-glutamate: step 1/2. This Pseudomonas aeruginosa (strain LESB58) protein is Glutamate--cysteine ligase.